The sequence spans 1029 residues: Tyrosine-protein kinase-like otk (1029 aa).

The first 18 residues, 1–18 (MISIYGLVMALMMASVLA), serve as a signal peptide directing secretion. The Extracellular segment spans residues 19–577 (SSSRFQRVPQ…GGDGFLVTRA (559 aa)). Ig-like C2-type domains follow at residues 21–110 (SRFQ…AKLS), 109–195 (LSVI…RVMS), 247–361 (PEDL…APIS), 364–459 (PGIL…VAIN), and 464–554 (PKFS…VQLV). N-linked (GlcNAc...) asparagine glycosylation is present at Asn35. Intrachain disulfides connect Cys42/Cys91, Cys133/Cys184, Cys272/Cys350, and Cys395/Cys443. 7 N-linked (GlcNAc...) asparagine glycosylation sites follow: Asn332, Asn413, Asn425, Asn440, Asn453, Asn508, and Asn520. Cys486 and Cys538 are oxidised to a cystine. A helical membrane pass occupies residues 578 to 598 (VLITMTVALAYIVLVVGLMLW). At 599-1029 (CRYRRQARKA…LSKAMQSAEK (431 aa)) the chain is on the cytoplasmic side. 2 disordered regions span residues 613-675 (LSTK…KKSA) and 714-756 (SPSD…KTSM). A compositionally biased stretch (polar residues) spans 651–669 (KSSGDAQKSDDTACSQQSR). Ser674 is subject to Phosphoserine. The region spanning 688–1024 (LSELIQIGRG…QLGAALSKAM (337 aa)) is the Protein kinase; inactive domain. Residues 716-727 (SDKDADTEKQHS) show a composition bias toward basic and acidic residues.

This sequence belongs to the protein kinase superfamily. Tyr protein kinase family. Insulin receptor subfamily. In terms of assembly, interacts with plexA; component of a receptor complex that mediates the repulsive signaling in response to Semaphorin ligands.

It is found in the cell membrane. Its function is as follows. Acts as a calcium-dependent, homophilic cell adhesion molecule that regulates neural recognition during the development of the nervous system. Component of the repulsive Plexin signaling response to regulate motor axon guidance at the embryonic stage. Also component of a receptor complex that is required in the adult visual system to innervate the lamina layer; specific targeting of R1-R6 axons. This is Tyrosine-protein kinase-like otk from Drosophila simulans (Fruit fly).